The sequence spans 581 residues: Arginine--tRNA ligase (581 aa).

The 'HIGH' region motif lies at 126–136; it reads PNLAKEMHVGH.

This sequence belongs to the class-I aminoacyl-tRNA synthetase family. In terms of assembly, monomer.

It is found in the cytoplasm. It carries out the reaction tRNA(Arg) + L-arginine + ATP = L-arginyl-tRNA(Arg) + AMP + diphosphate. This chain is Arginine--tRNA ligase, found in Shewanella sp. (strain ANA-3).